Here is a 129-residue protein sequence, read N- to C-terminus: Virion-associated protein (129 aa).

Coiled coils occupy residues 1-31 (MANL…ILEL) and 38-59 (IKES…LIND). Residues 122-129 (PAGWPNQY) form a capsid binding region.

The protein belongs to the caulimovirus ORF III family. In terms of assembly, homotetramer, through coiled-coil domain. Homotrimer when interacts with icosehadral capsid. Interacts with capsid protein, and with Movement protein.

It localises to the virion. The protein resides in the host cell junction. It is found in the host plasmodesma. In terms of biological role, plays a role in virus cell-to-cell and plant-to-plant transmission. Interacts with virion icosahedral capsid and movement protein, thereby facilitating virion cell-to-cell transmission through plasmodesmata opened by viral movement protein. Also interacts with aphid transmission factor, attaching the virion to aphid stylet when the animal feeds on an virus infected plant. Aphid saliva may later detach the virion, inducing release of infectious particles when the animal feeds on a new plant. This Cauliflower mosaic virus (strain D/H) (CaMV) protein is Virion-associated protein.